The chain runs to 287 residues: Formamidopyrimidine-DNA glycosylase (287 aa).

Pro-2 acts as the Schiff-base intermediate with DNA in catalysis. Glu-3 (proton donor) is an active-site residue. Lys-58 serves as the catalytic Proton donor; for beta-elimination activity. DNA contacts are provided by His-104, Arg-123, and Arg-166. An FPG-type zinc finger spans residues 251–287 (RVYDREGQPCPTPGCKGMIGREVQAGRSTFFCPVCQV). The active-site Proton donor; for delta-elimination activity is Arg-277.

This sequence belongs to the FPG family. In terms of assembly, monomer. It depends on Zn(2+) as a cofactor.

It carries out the reaction Hydrolysis of DNA containing ring-opened 7-methylguanine residues, releasing 2,6-diamino-4-hydroxy-5-(N-methyl)formamidopyrimidine.. It catalyses the reaction 2'-deoxyribonucleotide-(2'-deoxyribose 5'-phosphate)-2'-deoxyribonucleotide-DNA = a 3'-end 2'-deoxyribonucleotide-(2,3-dehydro-2,3-deoxyribose 5'-phosphate)-DNA + a 5'-end 5'-phospho-2'-deoxyribonucleoside-DNA + H(+). Involved in base excision repair of DNA damaged by oxidation or by mutagenic agents. Acts as a DNA glycosylase that recognizes and removes damaged bases. Has a preference for oxidized purines, such as 7,8-dihydro-8-oxoguanine (8-oxoG). Has AP (apurinic/apyrimidinic) lyase activity and introduces nicks in the DNA strand. Cleaves the DNA backbone by beta-delta elimination to generate a single-strand break at the site of the removed base with both 3'- and 5'-phosphates. The sequence is that of Formamidopyrimidine-DNA glycosylase from Caulobacter sp. (strain K31).